The chain runs to 253 residues: Adapter protein MecA (253 aa).

The protein belongs to the MecA family. In terms of assembly, homodimer.

In terms of biological role, enables the recognition and targeting of unfolded and aggregated proteins to the ClpC protease or to other proteins involved in proteolysis. The chain is Adapter protein MecA from Streptococcus pyogenes serotype M18 (strain MGAS8232).